Consider the following 1104-residue polypeptide: Reverse gyrase (1104 aa).

The segment at 1 to 39 (MAVNSKYHHSCINCGGLNTDERNERGLPCEVCLPEDSPS) adopts an RG N-terminal-type zinc-finger fold. 4 residues coordinate Zn(2+): Cys-11, Cys-14, Cys-29, and Cys-32. The ADP site is built by Phe-75, Asp-78, Gln-83, Gly-103, Gly-105, Lys-106, Thr-107, and Thr-108. ATP is bound by residues Gln-83 and 100-107 (APTGVGKT). Positions 87–242 (AKRIVQGKSF…FSTIKQGKIY (156 aa)) constitute a Helicase ATP-binding domain. Positions 203-206 (DDVD) match the DEAD box motif. Positions 223–250 (GIPEEIIRKAFSTIKQGKIYERPKNLKP) are insert region. Residues 300–522 (KLVELLEIFR…EAEANWKELV (223 aa)) enclose the Helicase C-terminal domain. The tract at residues 390–460 (RFSLELDKAP…KDEDLELIIP (71 aa)) is latch region. The interval 538–1104 (DTSRSLLIIV…EEIKSLMEEG (567 aa)) is topoisomerase I. A Toprim domain is found at 542 to 699 (SLLIIVESPT…SLRRIEMHEI (158 aa)). Residue Glu-548 participates in Mg(2+) binding. An RG C-terminal-type zinc finger spans residues 618 to 645 (LKRCRDCGYQFTEDRDECPVCSSKNIDD). Residues Cys-621, Cys-624, Cys-635, and Cys-638 each contribute to the Zn(2+) site. Asp-668 serves as a coordination point for Mg(2+). Residues 715-1101 (DFNLVKAQIV…LLYEEIKSLM (387 aa)) enclose the Topo IA-type catalytic domain. Tyr-851 acts as the O-(5'-phospho-DNA)-tyrosine intermediate in catalysis.

This sequence in the N-terminal section; belongs to the DEAD box helicase family. DDVD subfamily. In the C-terminal section; belongs to the type IA topoisomerase family. In terms of assembly, monomer. It depends on Zn(2+) as a cofactor. Requires Mg(2+) as cofactor.

It is found in the cytoplasm. It catalyses the reaction ATP + H2O = ADP + phosphate + H(+). Modifies the topological state of DNA by introducing positive supercoils in an ATP-dependent process. Increases the linking number in steps of +1. Probably recognizes regions with a low GC content which melt and form a ssDNA bubble, allowing the enzyme to bind and cleave the DNA prior to strand passage; the bubble is probably cleaved by 2 reverse gyrase molecules, one on each strand. Positively supercoils DNA with all NTPS, although it strongly prefers ATP. In the presence of non-hydrolyzable ATP analogs it partially relaxes negative supercoils. Has an intrinsic ATPase activity that is stimulated by DNA; ssDNA is most effective. Binds to single-stranded DNA, transiently cleaves and then rejoins the ends, introducing a positive supercoil in the process. The scissile phosphodiester is attacked by the catalytic tyrosine of the enzyme, resulting in the formation of a DNA-(5'-phosphotyrosyl)-enzyme intermediate. The helicase-like domain is a nucleotide-dependent switch that alternates between a physically closed ATP-bound state with a slight preference for dsDNA, and an open ADP-bound state with a high preference for ssDNA. Whole enzyme has a very poor (k-unwind=0.001 sec(-1)) non-processive helicase activity in the 3'-5' direction that works on short substrates, while the isolated helicase domain has a slightly better helicase activity that works in both directions. Probably involved in rewinding DNA strands in regions of the chromosome that have opened up to allow replication, transcription, DNA repair and/or for DNA protection. This chain is Reverse gyrase, found in Thermotoga maritima (strain ATCC 43589 / DSM 3109 / JCM 10099 / NBRC 100826 / MSB8).